Here is an 84-residue protein sequence, read N- to C-terminus: MSTIKVKSAHKDGQIKLEDLDVVCNKLCKRNNSVLFKLEKYLNKKLLSDPELTEIRDTILTVSGELSRLRDNLVTDGDSNEGLQ.

This is SPbeta prophage-derived uncharacterized protein YomY (yomY) from Bacillus subtilis (strain 168).